The primary structure comprises 297 residues: Glycerol-3-phosphate dehydrogenase [NAD(P)+] (297 aa).

Trp11, Arg33, and Lys79 together coordinate NADPH. Positions 79, 107, and 109 each coordinate sn-glycerol 3-phosphate. Residue Ala111 participates in NADPH binding. Sn-glycerol 3-phosphate is bound by residues Lys161, Asp214, Ser224, Arg225, and Asn226. Lys161 functions as the Proton acceptor in the catalytic mechanism. Position 225 (Arg225) interacts with NADPH. NADPH-binding residues include Val249 and Glu251.

This sequence belongs to the NAD-dependent glycerol-3-phosphate dehydrogenase family.

The protein resides in the cytoplasm. It catalyses the reaction sn-glycerol 3-phosphate + NAD(+) = dihydroxyacetone phosphate + NADH + H(+). The enzyme catalyses sn-glycerol 3-phosphate + NADP(+) = dihydroxyacetone phosphate + NADPH + H(+). Its pathway is membrane lipid metabolism; glycerophospholipid metabolism. Catalyzes the reduction of the glycolytic intermediate dihydroxyacetone phosphate (DHAP) to sn-glycerol 3-phosphate (G3P), the key precursor for phospholipid synthesis. In Campylobacter jejuni subsp. jejuni serotype O:6 (strain 81116 / NCTC 11828), this protein is Glycerol-3-phosphate dehydrogenase [NAD(P)+].